A 205-amino-acid chain; its full sequence is Molybdenum cofactor guanylyltransferase (205 aa).

GTP contacts are provided by residues 14 to 16 (LAG), lysine 27, aspartate 77, and aspartate 107. Aspartate 107 is a Mg(2+) binding site.

It belongs to the MobA family. In terms of assembly, monomer. Mg(2+) is required as a cofactor.

It is found in the cytoplasm. It catalyses the reaction Mo-molybdopterin + GTP + H(+) = Mo-molybdopterin guanine dinucleotide + diphosphate. Its function is as follows. Transfers a GMP moiety from GTP to Mo-molybdopterin (Mo-MPT) cofactor (Moco or molybdenum cofactor) to form Mo-molybdopterin guanine dinucleotide (Mo-MGD) cofactor. This Burkholderia ambifaria (strain ATCC BAA-244 / DSM 16087 / CCUG 44356 / LMG 19182 / AMMD) (Burkholderia cepacia (strain AMMD)) protein is Molybdenum cofactor guanylyltransferase.